The chain runs to 397 residues: Lysophospholipid transporter LplT (397 aa).

Over 1 to 17 (MSESVHTNTSLWSKGMK) the chain is Periplasmic. The chain crosses the membrane as a helical span at residues 18-38 (AVIVAQFLSAFGDNALLFATL). Topologically, residues 39–52 (ALLKAQFYPEWSQP) are cytoplasmic. Residues 53-73 (ILQMVFVGAYILFAPFVGQVA) form a helical membrane-spanning segment. Over 74 to 90 (DSFAKGRVMMFANGLKL) the chain is Periplasmic. The helical transmembrane segment at 91–111 (LGAASICFGINPFLGYTLVGV) threads the bilayer. Over 112 to 144 (GAAAYSPAKYGILGELTTGSKLVKANGLMEAST) the chain is Cytoplasmic. The helical transmembrane segment at 145-165 (IAAILLGSVAGGVLADWHVLV) threads the bilayer. A topological domain (periplasmic) is located at residue Ala-166. The helical transmembrane segment at 167-187 (LAACALAYGGAVVANIYIPKL) threads the bilayer. Residues 188–226 (AAARPGQSWNLINMTRSFLNACTSLWRNGETRFSLVGTS) lie on the Cytoplasmic side of the membrane. The chain crosses the membrane as a helical span at residues 227 to 247 (LFWGAGVTLRFLLVLWVPVAL). The Periplasmic segment spans residues 248-256 (GITDNATPT). Residues 257–277 (YLNAMVAIGIVVGAGAAAKLV) traverse the membrane as a helical segment. Over 278–280 (TLE) the chain is Cytoplasmic. A helical membrane pass occupies residues 281–301 (TVSRCMPAGILIGVVVLIFSL). Residues 302–304 (QHE) are Periplasmic-facing. Residues 305–325 (LLPAYALLMLIGVMGGFFVVP) traverse the membrane as a helical segment. Residues 326 to 343 (LNALLQERGKKSVGAGNA) lie on the Cytoplasmic side of the membrane. The helical transmembrane segment at 344-364 (IAVQNLGENSAMLLMLGIYSL) threads the bilayer. Residues 365-366 (AV) lie on the Periplasmic side of the membrane. Residues 367-387 (MIGIPVVPIGIGFGALFALAI) form a helical membrane-spanning segment. At 388-397 (TALWIWQRRH) the chain is on the cytoplasmic side.

It belongs to the major facilitator superfamily. LplT (TC 2.A.1.42) family.

The protein resides in the cell inner membrane. Catalyzes the facilitated diffusion of 2-acyl-glycero-3-phosphoethanolamine (2-acyl-GPE) into the cell. This Escherichia coli O8 (strain IAI1) protein is Lysophospholipid transporter LplT.